The sequence spans 129 residues: D-ribose pyranase (129 aa).

The active-site Proton donor is His-20. Substrate is bound by residues Asp-28, His-96, and 118–120 (YAN).

The protein belongs to the RbsD / FucU family. RbsD subfamily. As to quaternary structure, homodecamer.

Its subcellular location is the cytoplasm. The catalysed reaction is beta-D-ribopyranose = beta-D-ribofuranose. Its pathway is carbohydrate metabolism; D-ribose degradation; D-ribose 5-phosphate from beta-D-ribopyranose: step 1/2. Catalyzes the interconversion of beta-pyran and beta-furan forms of D-ribose. The protein is D-ribose pyranase of Staphylococcus haemolyticus (strain JCSC1435).